Here is a 330-residue protein sequence, read N- to C-terminus: Cathepsin K (330 aa).

Residues 1–16 (MWGLKVVLLLPVMSSA) form the signal peptide. Positions 17 to 115 (LYPEEILDTQ…TLYIPDWEGR (99 aa)) are cleaved as a propeptide — activation peptide. N-linked (GlcNAc...) asparagine glycosylation occurs at Asn-104. 3 disulfides stabilise this stretch: Cys-137–Cys-178, Cys-171–Cys-211, and Cys-270–Cys-319. Cys-140 is a catalytic residue. Residues His-277 and Asn-297 contribute to the active site.

Belongs to the peptidase C1 family. Expressed in the thyroid epithelial cells.

It is found in the lysosome. The protein resides in the secreted. Its subcellular location is the apical cell membrane. It carries out the reaction Broad proteolytic activity. With small-molecule substrates and inhibitors, the major determinant of specificity is P2, which is preferably Leu, Met &gt; Phe, and not Arg.. Thiol protease involved in osteoclastic bone resorption and may participate partially in the disorder of bone remodeling. Displays potent endoprotease activity against fibrinogen at acid pH. May play an important role in extracellular matrix degradation. Involved in the release of thyroid hormone thyroxine (T4) by limited proteolysis of TG/thyroglobulin in the thyroid follicle lumen. The sequence is that of Cathepsin K (CTSK) from Sus scrofa (Pig).